Reading from the N-terminus, the 191-residue chain is Large ribosomal subunit protein bL9c (191 aa).

Residues 1–35 constitute a chloroplast transit peptide; it reads MASPSCASTLPWTAAAFSYPRRLQTRRAPSLVIVA.

This sequence belongs to the bacterial ribosomal protein bL9 family. As to quaternary structure, part of the 50S ribosomal subunit.

Its subcellular location is the plastid. The protein localises to the chloroplast. Functionally, binds to the 23S rRNA. The polypeptide is Large ribosomal subunit protein bL9c (RPL9) (Triticum aestivum (Wheat)).